The following is a 233-amino-acid chain: 5'-methylthioadenosine/S-adenosylhomocysteine nucleosidase (233 aa).

The Proton acceptor role is filled by glutamate 12. Substrate-binding positions include glycine 78, isoleucine 152, and methionine 173–glutamate 174. Residue aspartate 197 is the Proton donor of the active site.

Belongs to the PNP/UDP phosphorylase family. MtnN subfamily. In terms of assembly, homodimer.

The enzyme catalyses S-adenosyl-L-homocysteine + H2O = S-(5-deoxy-D-ribos-5-yl)-L-homocysteine + adenine. It catalyses the reaction S-methyl-5'-thioadenosine + H2O = 5-(methylsulfanyl)-D-ribose + adenine. It carries out the reaction 5'-deoxyadenosine + H2O = 5-deoxy-D-ribose + adenine. Its pathway is amino-acid biosynthesis; L-methionine biosynthesis via salvage pathway; S-methyl-5-thio-alpha-D-ribose 1-phosphate from S-methyl-5'-thioadenosine (hydrolase route): step 1/2. Catalyzes the irreversible cleavage of the glycosidic bond in both 5'-methylthioadenosine (MTA) and S-adenosylhomocysteine (SAH/AdoHcy) to adenine and the corresponding thioribose, 5'-methylthioribose and S-ribosylhomocysteine, respectively. Also cleaves 5'-deoxyadenosine, a toxic by-product of radical S-adenosylmethionine (SAM) enzymes, into 5-deoxyribose and adenine. Thus, is required for in vivo function of the radical SAM enzymes biotin synthase and lipoic acid synthase, that are inhibited by 5'-deoxyadenosine accumulation. In Sodalis glossinidius (strain morsitans), this protein is 5'-methylthioadenosine/S-adenosylhomocysteine nucleosidase.